The following is a 157-amino-acid chain: uncharacterized protein (157 aa).

An N-terminal signal peptide occupies residues 1-23 (MEALRRAHEATLRLLLCRPWASG).

It is found in the secreted. This is an uncharacterized protein from Mus musculus (Mouse).